The primary structure comprises 197 residues: Phosphoheptose isomerase (197 aa).

The SIS domain occupies 37–197 (MLQCLMNDGK…CIDSVLLEGM (161 aa)). 52–54 (NGG) contributes to the substrate binding site. Zn(2+) is bound by residues H61 and E65. Substrate-binding positions include E65, 94-95 (ND), 120-122 (STS), S125, and Q175. Positions 175 and 183 each coordinate Zn(2+).

It belongs to the SIS family. GmhA subfamily. As to quaternary structure, homotetramer. The cofactor is Zn(2+).

Its subcellular location is the cytoplasm. It carries out the reaction 2 D-sedoheptulose 7-phosphate = D-glycero-alpha-D-manno-heptose 7-phosphate + D-glycero-beta-D-manno-heptose 7-phosphate. The protein operates within carbohydrate biosynthesis; D-glycero-D-manno-heptose 7-phosphate biosynthesis; D-glycero-alpha-D-manno-heptose 7-phosphate and D-glycero-beta-D-manno-heptose 7-phosphate from sedoheptulose 7-phosphate: step 1/1. Its pathway is bacterial outer membrane biogenesis; LOS core biosynthesis. Functionally, catalyzes the isomerization of sedoheptulose 7-phosphate in D-glycero-D-manno-heptose 7-phosphate. This chain is Phosphoheptose isomerase, found in Neisseria meningitidis serogroup A / serotype 4A (strain DSM 15465 / Z2491).